The primary structure comprises 457 residues: Chromosomal replication initiator protein DnaA (457 aa).

The tract at residues 1–81 (MERDLSQLWQ…NNTDLVIKVQ (81 aa)) is domain I, interacts with DnaA modulators. Positions 81–119 (QEGSKPAARKVVAQQEIANTPVQHSAPMPENEPQAAFRS) are domain II. The tract at residues 120–337 (NLNQHHLFEN…GALNRVHANA (218 aa)) is domain III, AAA+ region. Glycine 165, glycine 167, lysine 168, and threonine 169 together coordinate ATP. The segment at 338 to 457 (DFTGKAITID…WSNLIRTLSA (120 aa)) is domain IV, binds dsDNA.

The protein belongs to the DnaA family. In terms of assembly, oligomerizes as a right-handed, spiral filament on DNA at oriC.

The protein localises to the cytoplasm. Its function is as follows. Plays an essential role in the initiation and regulation of chromosomal replication. ATP-DnaA binds to the origin of replication (oriC) to initiate formation of the DNA replication initiation complex once per cell cycle. Binds the DnaA box (a 9 base pair repeat at the origin) and separates the double-stranded (ds)DNA. Forms a right-handed helical filament on oriC DNA; dsDNA binds to the exterior of the filament while single-stranded (ss)DNA is stabiized in the filament's interior. The ATP-DnaA-oriC complex binds and stabilizes one strand of the AT-rich DNA unwinding element (DUE), permitting loading of DNA polymerase. After initiation quickly degrades to an ADP-DnaA complex that is not apt for DNA replication. Binds acidic phospholipids. This Mannheimia succiniciproducens (strain KCTC 0769BP / MBEL55E) protein is Chromosomal replication initiator protein DnaA.